A 138-amino-acid chain; its full sequence is Probable lactoylglutathione lyase (138 aa).

Residues 5-129 (RILHTMLRVG…DGYMIELIQN (125 aa)) enclose the VOC domain. Histidine 8 serves as a coordination point for Ni(2+). Arginine 12 is a binding site for substrate. Residue glutamate 59 coordinates Ni(2+). Asparagine 63 and histidine 77 together coordinate substrate. Positions 77 and 125 each coordinate Ni(2+). Glutamate 125 serves as the catalytic Proton donor/acceptor.

Belongs to the glyoxalase I family. Ni(2+) serves as cofactor.

The catalysed reaction is (R)-S-lactoylglutathione = methylglyoxal + glutathione. The protein operates within secondary metabolite metabolism; methylglyoxal degradation; (R)-lactate from methylglyoxal: step 1/2. In terms of biological role, catalyzes the conversion of hemimercaptal, formed from methylglyoxal and glutathione, to S-lactoylglutathione. In Vibrio cholerae serotype O1 (strain ATCC 39315 / El Tor Inaba N16961), this protein is Probable lactoylglutathione lyase (gloA).